A 615-amino-acid polypeptide reads, in one-letter code: Elongation factor 4 (615 aa).

Residues 14 to 196 (AMIRNFCIIA…EIVRQVPAPV (183 aa)) form the tr-type G domain. Residues 26–31 (DHGKST) and 143–146 (NKID) contribute to the GTP site.

This sequence belongs to the TRAFAC class translation factor GTPase superfamily. Classic translation factor GTPase family. LepA subfamily.

Its subcellular location is the cell membrane. The enzyme catalyses GTP + H2O = GDP + phosphate + H(+). Required for accurate and efficient protein synthesis under certain stress conditions. May act as a fidelity factor of the translation reaction, by catalyzing a one-codon backward translocation of tRNAs on improperly translocated ribosomes. Back-translocation proceeds from a post-translocation (POST) complex to a pre-translocation (PRE) complex, thus giving elongation factor G a second chance to translocate the tRNAs correctly. Binds to ribosomes in a GTP-dependent manner. In Frankia alni (strain DSM 45986 / CECT 9034 / ACN14a), this protein is Elongation factor 4.